Reading from the N-terminus, the 372-residue chain is Integral membrane protein GPR137B (372 aa).

At 1-32 (MESPAWDATKNDSLPPTLTPAVPPYVKLGLTT) the chain is on the lumenal side. N-linked (GlcNAc...) asparagine glycosylation is present at Asn11. Residues 33–53 (VYTIFYLLLFAFVYVQLWLVL) form a helical membrane-spanning segment. Residues 54 to 64 (HYKHKRFSYQT) lie on the Cytoplasmic side of the membrane. A helical transmembrane segment spans residues 65 to 85 (VFLFLCLLWASLRAVLFSFYF). The Lumenal segment spans residues 86–93 (RNFVEANR). The helical transmembrane segment at 94–114 (LGAFTFWLLYCFPVCLQFFTL) threads the bilayer. Residues 115-144 (TLMNLYFARVIYKAKSKYLPELIKYRLPLY) lie on the Cytoplasmic side of the membrane. The helical transmembrane segment at 145 to 165 (LAFLVISLLFLVVNLTCAILV) threads the bilayer. Residues 166–173 (KTDYAETK) lie on the Lumenal side of the membrane. Residues 174 to 194 (VIVSIRVAINDTLFVLCAVSL) form a helical membrane-spanning segment. Residues 195-222 (SVCLYKISKMSLAGVYLESKGSSVCQVT) are Cytoplasmic-facing. Residues 223 to 243 (CIGVTVILLYTSRACYNLVVL) form a helical membrane-spanning segment. The Lumenal segment spans residues 244-276 (SLSDSRYSSFDYDWYNVSDQADLKCKLGDAGYV). Asn259 is a glycosylation site (N-linked (GlcNAc...) asparagine). Residues 277 to 297 (VFGIILFIWELFPTSLVVYFF) traverse the membrane as a helical segment. The Cytoplasmic segment spans residues 298–372 (RVRNSAQDMT…QTGSLQRDST (75 aa)).

This sequence belongs to the GPR137 family.

It is found in the lysosome membrane. Functionally, lysosomal integral membrane protein that regulates the localization and activity of mTORC1, a signaling complex promoting cell growth in response to growth factors, energy levels, and amino acids. Interacts with Rag GTPases and increases the lysosomial localization and activity of Rag GTPases and thereby regulates mTORC1 translocation and activity in lysosome. Involved in the regulation of lysosomal morphology and autophagy. Also acts as a negative regulator of osteoclast activity. In terms of biological role, also acts as a negative regulator of osteoclast activity. The chain is Integral membrane protein GPR137B (gpr137b) from Xenopus laevis (African clawed frog).